Consider the following 410-residue polypeptide: Lissencephaly-1 homolog B (410 aa).

Positions 7 to 39 (QRDELNRAIADYLRSNGYEEAYSTFKKEAELDM) constitute a LisH domain. Residues 56–82 (TSVIRLQKKVMELESKLNEAKEEITLG) adopt a coiled-coil conformation. 7 WD repeats span residues 106–147 (GHRS…RTLK), 148–187 (GHTD…CIRT), 190–229 (GHDH…CVKT), 232–271 (GHRE…CKAE), 274–333 (EHEH…CLMT), 336–375 (GHDN…CMKT), and 378–410 (AHEH…WECR).

Belongs to the WD repeat LIS1/nudF family. As to quaternary structure, can self-associate. Component of the cytosolic PAF-AH (I) heterotetrameric enzyme, which is composed of PAFAH1B1 (beta), PAFAH1B2 (alpha2) and PAFAH1B3 (alpha1) subunits. The catalytic activity of the enzyme resides in the alpha1 (PAFAH1B3) and alpha2 (PAFAH1B2) subunits, whereas the beta subunit (PAFAH1B1) has regulatory activity. Trimer formation is not essential for the catalytic activity. Interacts with dynein, dynactin, nde1 and ndel1.

The protein localises to the cytoplasm. Its subcellular location is the cytoskeleton. It localises to the microtubule organizing center. The protein resides in the centrosome. In terms of biological role, regulatory subunit (beta subunit) of the cytosolic type I platelet-activating factor (PAF) acetylhydrolase (PAF-AH (I)), an enzyme that catalyzes the hydrolyze of the acetyl group at the sn-2 position of PAF and its analogs and participates in PAF inactivation. Regulates the PAF-AH (I) activity in a catalytic dimer composition-dependent manner. Positively regulates the activity of the minus-end directed microtubule motor protein dynein. May enhance dynein-mediated microtubule sliding by targeting dynein to the microtubule plus end. Required for several dynein- and microtubule-dependent processes such as the maintenance of Golgi integrity, the peripheral transport of microtubule fragments and the coupling of the nucleus and centrosome. May be required for proliferation of neuronal precursors and neuronal migration. This is Lissencephaly-1 homolog B (pafah1b1-2) from Salmo salar (Atlantic salmon).